We begin with the raw amino-acid sequence, 488 residues long: C2H2-type transcription factor MSN2 (488 aa).

C2H2-type zinc fingers lie at residues 376 to 399 and 405 to 427; these read FVCD…RSLH and FECN…ARTH.

The protein localises to the nucleus. It is found in the cytoplasm. Transcription factor that acts as a key downstream transcription factor in the HOG1-MAPK pathway. Plays crucial roles in the regulation of conidiation, virulence and multi-stress responses. Acts as a negative regulator of proteases, lipases, as well as of the red-pigmented oosporein production, and contributes to virulence and growth in response to external pH. Contributes to the ability to infect Rhipicephalus microplus (Acari, Ixodidae) via the cuticle-penetration requiring route involving proteolytic activity at the host cuticle. Does not seem to be involved in subsequent growth and proliferation once the tick cuticle has been breached. This is C2H2-type transcription factor MSN2 from Beauveria bassiana (strain ARSEF 2860) (White muscardine disease fungus).